The sequence spans 957 residues: MTQTLSQLENSGAFIERHIGPDAAQQQEMLNAVGAQSLNALTGQIVPKDIQLATPPQVGAPATEYAALAELKAIASRNKRFTSYIGMGYTAVQLPPVILRNMLENPGWYTAYTPYQPEVSQGRLEALLNFQQVTLDLTGLDMASASLLDEATAAAEAMAMAKRVSKLKNANRFFVASDVHPQTLDVVRTRAETFGFEVIVDDAQKVLDHQDVFGVLLQQVGTTGEIHDYTALISELKSRKIVVSVAADIMALVLLTAPGKQGADIVFGSAQRFGVPMGYGGPHAAFFAAKDEYKRSMPGRIIGVSKDAAGNTALRMAMQTREQHIRREKANSNICTSQVLLANIASLYAVYHGPVGLKRIANRIHRLTDILAAGLQQKGLKLRHAHYFDTLCVEVADKAGVLARAEAAEINLRSDILNAVGITLDETTTRENVMQLFSVLLGDNHGLDIDTLDKDVAHDSRSIQPAMLRDDEILTHPVFNRYHSETEMMRYMHSLERKDLALNQAMIPLGSCTMKLNAAAEMIPITWPEFAELHPFCPPEQAEGYQQMIAQLADWLVKLTGYDAVCMQPNSGAQGEYAGLLAIRHYHESRNEGHRDICLIPASAHGTNPASAHMAGMQVVVVACDKNGNIDLADLRAKAEQAGDNLSCIMVTYPSTHGVYEETIREVCEVVHQFGGQVYLDGANMNAQVGITSPGFIGADVSHLNLHKTFCIPHGGGGPGMGPIGVKAHLAPFVPGHSVVQIEGMLTRQGAVSAAPFGSASILPISWMYIRMMGAEGLKKASQVAILNANYIASRLQDAFPVLYTGRDGRVAHECILDIRPLKEETGISELDIAKRLIDYGFHAPTMSFPVAGTLMVEPTESESKVELDRFIDAMLAIRSEIDQVKAGVWPLEDNPLVNAPHIQSELVAEWAHPYSREVAVFPAGVADKYWPTVKRLDDVYGDRNLFCSCVPISEYQ.

Lys708 carries the post-translational modification N6-(pyridoxal phosphate)lysine.

This sequence belongs to the GcvP family. As to quaternary structure, the glycine cleavage system is composed of four proteins: P, T, L and H. Requires pyridoxal 5'-phosphate as cofactor.

It carries out the reaction N(6)-[(R)-lipoyl]-L-lysyl-[glycine-cleavage complex H protein] + glycine + H(+) = N(6)-[(R)-S(8)-aminomethyldihydrolipoyl]-L-lysyl-[glycine-cleavage complex H protein] + CO2. Its function is as follows. The glycine cleavage system catalyzes the degradation of glycine. The P protein binds the alpha-amino group of glycine through its pyridoxal phosphate cofactor; CO(2) is released and the remaining methylamine moiety is then transferred to the lipoamide cofactor of the H protein. This chain is Glycine dehydrogenase (decarboxylating), found in Escherichia coli O7:K1 (strain IAI39 / ExPEC).